We begin with the raw amino-acid sequence, 169 residues long: Ribosome maturation factor RimM (169 aa).

The PRC barrel domain maps to 97–169 (EDEVYFKDLI…KIVVDWEYDY (73 aa)).

The protein belongs to the RimM family. As to quaternary structure, binds ribosomal protein uS19.

The protein resides in the cytoplasm. An accessory protein needed during the final step in the assembly of 30S ribosomal subunit, possibly for assembly of the head region. Essential for efficient processing of 16S rRNA. May be needed both before and after RbfA during the maturation of 16S rRNA. It has affinity for free ribosomal 30S subunits but not for 70S ribosomes. This is Ribosome maturation factor RimM from Francisella tularensis subsp. holarctica (strain FTNF002-00 / FTA).